A 301-amino-acid polypeptide reads, in one-letter code: 5'-adenylylsulfate reductase-like 5 (301 aa).

The signal sequence occupies residues 1–21; that stretch reads MTRCAVVAAVAAVLLVAGAAA. The Thioredoxin domain maps to 51–164; it reads CIRIEPSPPV…LVDFYKETTG (114 aa). N139 carries an N-linked (GlcNAc...) asparagine glycan. The chain crosses the membrane as a helical span at residues 201 to 221; it reads FVLLAVLFIILKVAAHFVPIV. N-linked (GlcNAc...) asparagine glycosylation is present at N268.

Its subcellular location is the membrane. This chain is 5'-adenylylsulfate reductase-like 5 (APRL5), found in Oryza sativa subsp. japonica (Rice).